Reading from the N-terminus, the 173-residue chain is Glutamyl-tRNA(Gln) amidotransferase subunit C, mitochondrial (173 aa).

The protein belongs to the GatC family. As to quaternary structure, subunit of the heterotrimeric GatCAB amidotransferase (AdT) complex, composed of A, B and C subunits.

Its subcellular location is the mitochondrion. The catalysed reaction is L-glutamyl-tRNA(Gln) + L-glutamine + ATP + H2O = L-glutaminyl-tRNA(Gln) + L-glutamate + ADP + phosphate + H(+). Its function is as follows. Allows the formation of correctly charged Gln-tRNA(Gln) through the transamidation of misacylated Glu-tRNA(Gln) in the mitochondria. The reaction takes place in the presence of glutamine and ATP through an activated gamma-phospho-Glu-tRNA(Gln). This is Glutamyl-tRNA(Gln) amidotransferase subunit C, mitochondrial from Drosophila persimilis (Fruit fly).